A 445-amino-acid chain; its full sequence is Probable carboxypeptidase UREG_07869 (445 aa).

A signal peptide spans Met1–Cys17. Asp165 serves as a coordination point for Zn(2+). Glu197 serves as the catalytic Proton acceptor. Zn(2+) is bound at residue Glu198.

Belongs to the peptidase M20A family. The cofactor is Zn(2+).

Its subcellular location is the secreted. This is Probable carboxypeptidase UREG_07869 from Uncinocarpus reesii (strain UAMH 1704).